The following is a 196-amino-acid chain: Large ribosomal subunit protein uL18 (196 aa).

It belongs to the universal ribosomal protein uL18 family. As to quaternary structure, part of the 50S ribosomal subunit. Contacts the 5S and 23S rRNAs.

This is one of the proteins that bind and probably mediate the attachment of the 5S RNA into the large ribosomal subunit, where it forms part of the central protuberance. The polypeptide is Large ribosomal subunit protein uL18 (Saccharolobus islandicus (strain Y.N.15.51 / Yellowstone #2) (Sulfolobus islandicus)).